We begin with the raw amino-acid sequence, 291 residues long: Nucleotide-binding protein Cthe_0113 (291 aa).

Residue 8 to 15 (GISGAGKS) participates in ATP binding. 59 to 62 (DIRG) provides a ligand contact to GTP.

This sequence belongs to the RapZ-like family.

Functionally, displays ATPase and GTPase activities. The protein is Nucleotide-binding protein Cthe_0113 of Acetivibrio thermocellus (strain ATCC 27405 / DSM 1237 / JCM 9322 / NBRC 103400 / NCIMB 10682 / NRRL B-4536 / VPI 7372) (Clostridium thermocellum).